A 341-amino-acid chain; its full sequence is L-threonine 3-dehydrogenase (341 aa).

C38 is a Zn(2+) binding site. Active-site charge relay system residues include T40 and H43. Residues H63, E64, C93, C96, C99, and C107 each coordinate Zn(2+). Residues I175, D195, R200, 262-264, and 286-287 contribute to the NAD(+) site; these read LGI and IY.

This sequence belongs to the zinc-containing alcohol dehydrogenase family. In terms of assembly, homotetramer. It depends on Zn(2+) as a cofactor.

The protein localises to the cytoplasm. It catalyses the reaction L-threonine + NAD(+) = (2S)-2-amino-3-oxobutanoate + NADH + H(+). It participates in amino-acid degradation; L-threonine degradation via oxydo-reductase pathway; glycine from L-threonine: step 1/2. Catalyzes the NAD(+)-dependent oxidation of L-threonine to 2-amino-3-ketobutyrate. The protein is L-threonine 3-dehydrogenase of Shewanella halifaxensis (strain HAW-EB4).